We begin with the raw amino-acid sequence, 351 residues long: Probable V-type proton ATPase subunit d (351 aa).

Belongs to the V-ATPase V0D/AC39 subunit family. In terms of assembly, V-ATPase is a heteromultimeric enzyme composed of a peripheral catalytic V1 complex (components A to H) attached to an integral membrane V0 proton pore complex (components: a, c, c', c'' and d).

In terms of biological role, subunit of the integral membrane V0 complex of vacuolar ATPase. Vacuolar ATPase is responsible for acidifying a variety of intracellular compartments in eukaryotic cells, thus providing most of the energy required for transport processes in the vacuolar system. This chain is Probable V-type proton ATPase subunit d, found in Oryza sativa subsp. japonica (Rice).